The following is a 202-amino-acid chain: Probable nicotinate-nucleotide adenylyltransferase (202 aa).

This sequence belongs to the NadD family.

It carries out the reaction nicotinate beta-D-ribonucleotide + ATP + H(+) = deamido-NAD(+) + diphosphate. The protein operates within cofactor biosynthesis; NAD(+) biosynthesis; deamido-NAD(+) from nicotinate D-ribonucleotide: step 1/1. Catalyzes the reversible adenylation of nicotinate mononucleotide (NaMN) to nicotinic acid adenine dinucleotide (NaAD). The chain is Probable nicotinate-nucleotide adenylyltransferase from Synechococcus sp. (strain JA-2-3B'a(2-13)) (Cyanobacteria bacterium Yellowstone B-Prime).